Here is a 158-residue protein sequence, read N- to C-terminus: Transcription elongation factor GreA (158 aa).

Positions 46 to 66 (AEYEAAKERQGFIEGRISELE) form a coiled coil.

Belongs to the GreA/GreB family.

Its function is as follows. Necessary for efficient RNA polymerase transcription elongation past template-encoded arresting sites. The arresting sites in DNA have the property of trapping a certain fraction of elongating RNA polymerases that pass through, resulting in locked ternary complexes. Cleavage of the nascent transcript by cleavage factors such as GreA or GreB allows the resumption of elongation from the new 3'terminus. GreA releases sequences of 2 to 3 nucleotides. This Neisseria meningitidis serogroup B (strain ATCC BAA-335 / MC58) protein is Transcription elongation factor GreA.